Consider the following 464-residue polypeptide: Probable 1,4-beta-D-glucan cellobiohydrolase C (464 aa).

An N-terminal signal peptide occupies residues 1–19; the sequence is MKNFAPSLALSLLLPTVQA. Residues 20 to 55 enclose the CBM1 domain; it reads QQTMWGQCGGAGWSGATDCVAGGVCSTQNAYYAQCL. Disulfide bonds link Cys27–Cys44 and Cys38–Cys54. The tract at residues 59 to 102 is thr-rich linker; it reads TTATTLSTTSKGTTTTTTSSTTSTGGGSSSTTTKTSTSAGPTVT. Residues 65-100 are compositionally biased toward low complexity; it reads STTSKGTTTTTTSSTTSTGGGSSSTTTKTSTSAGPT. The segment at 65-108 is disordered; that stretch reads STTSKGTTTTTTSSTTSTGGGSSSTTTKTSTSAGPTVTGSPSGN. A catalytic region spans residues 103 to 464; it reads GSPSGNPFSG…QLLTNANPAF (362 aa). The active site involves Asp194. 2 cysteine pairs are disulfide-bonded: Cys195–Cys254 and Cys386–Cys433. Asp240 functions as the Proton donor in the catalytic mechanism. Asp419 functions as the Nucleophile in the catalytic mechanism.

It belongs to the glycosyl hydrolase 6 (cellulase B) family.

Its subcellular location is the secreted. The catalysed reaction is Hydrolysis of (1-&gt;4)-beta-D-glucosidic linkages in cellulose and cellotetraose, releasing cellobiose from the non-reducing ends of the chains.. In terms of biological role, the biological conversion of cellulose to glucose generally requires three types of hydrolytic enzymes: (1) Endoglucanases which cut internal beta-1,4-glucosidic bonds; (2) Exocellobiohydrolases that cut the disaccharide cellobiose from the non-reducing end of the cellulose polymer chain; (3) Beta-1,4-glucosidases which hydrolyze the cellobiose and other short cello-oligosaccharides to glucose. In Aspergillus clavatus (strain ATCC 1007 / CBS 513.65 / DSM 816 / NCTC 3887 / NRRL 1 / QM 1276 / 107), this protein is Probable 1,4-beta-D-glucan cellobiohydrolase C (cbhC).